We begin with the raw amino-acid sequence, 254 residues long: tRNA uridine(34) hydroxylase (254 aa).

Positions 123-217 (QDPNVILLDT…YLESIPESES (95 aa)) constitute a Rhodanese domain. Residue C177 is the Cysteine persulfide intermediate of the active site.

Belongs to the TrhO family.

It carries out the reaction uridine(34) in tRNA + AH2 + O2 = 5-hydroxyuridine(34) in tRNA + A + H2O. Its function is as follows. Catalyzes oxygen-dependent 5-hydroxyuridine (ho5U) modification at position 34 in tRNAs. This is tRNA uridine(34) hydroxylase from Legionella pneumophila (strain Paris).